A 1165-amino-acid polypeptide reads, in one-letter code: Autophagy-related protein 11 (1165 aa).

2 coiled-coil regions span residues 239 to 304 (NKLN…YKNM) and 670 to 853 (DNIR…KQKK).

This sequence belongs to the ATG11 family. In terms of assembly, homodimer and potential homooligomers.

Its subcellular location is the preautophagosomal structure membrane. Plays an essential role in both non-selective and selective autophagy such as mitophagy. Recruits mitochondria for their selective degradation via autophagy (mitophagy) during starvation, through its interaction with ATG32. Works as scaffold proteins that recruit ATG proteins to the pre-autophagosome (PAS), the site of vesicle/autophagosome formation. Required for ATG9 anterograde transport from the mitochondria to the PAS. This Candida albicans (strain SC5314 / ATCC MYA-2876) (Yeast) protein is Autophagy-related protein 11.